A 407-amino-acid chain; its full sequence is Imidazolonepropionase (407 aa).

The Fe(3+) site is built by His72 and His74. The Zn(2+) site is built by His72 and His74. Residues Arg81, Tyr144, and His177 each contribute to the 4-imidazolone-5-propanoate site. Tyr144 serves as a coordination point for N-formimidoyl-L-glutamate. Position 242 (His242) interacts with Fe(3+). His242 is a Zn(2+) binding site. Residue Gln245 coordinates 4-imidazolone-5-propanoate. Residue Asp317 participates in Fe(3+) binding. Position 317 (Asp317) interacts with Zn(2+). Residues Asn319 and Gly321 each coordinate N-formimidoyl-L-glutamate. Thr322 contributes to the 4-imidazolone-5-propanoate binding site.

The protein belongs to the metallo-dependent hydrolases superfamily. HutI family. Zn(2+) is required as a cofactor. Fe(3+) serves as cofactor.

It localises to the cytoplasm. The enzyme catalyses 4-imidazolone-5-propanoate + H2O = N-formimidoyl-L-glutamate. Its pathway is amino-acid degradation; L-histidine degradation into L-glutamate; N-formimidoyl-L-glutamate from L-histidine: step 3/3. Its function is as follows. Catalyzes the hydrolytic cleavage of the carbon-nitrogen bond in imidazolone-5-propanoate to yield N-formimidoyl-L-glutamate. It is the third step in the universal histidine degradation pathway. In Aliivibrio salmonicida (strain LFI1238) (Vibrio salmonicida (strain LFI1238)), this protein is Imidazolonepropionase.